A 120-amino-acid chain; its full sequence is Aspartate 1-decarboxylase (120 aa).

Catalysis depends on Ser25, which acts as the Schiff-base intermediate with substrate; via pyruvic acid. Position 25 is a pyruvic acid (Ser) (Ser25). Thr57 contributes to the substrate binding site. Residue Tyr58 is the Proton donor of the active site. A substrate-binding site is contributed by 73–75 (GAA).

Belongs to the PanD family. As to quaternary structure, heterooctamer of four alpha and four beta subunits. It depends on pyruvate as a cofactor. In terms of processing, is synthesized initially as an inactive proenzyme, which is activated by self-cleavage at a specific serine bond to produce a beta-subunit with a hydroxyl group at its C-terminus and an alpha-subunit with a pyruvoyl group at its N-terminus.

The protein resides in the cytoplasm. The enzyme catalyses L-aspartate + H(+) = beta-alanine + CO2. It participates in cofactor biosynthesis; (R)-pantothenate biosynthesis; beta-alanine from L-aspartate: step 1/1. Functionally, catalyzes the pyruvoyl-dependent decarboxylation of aspartate to produce beta-alanine. This chain is Aspartate 1-decarboxylase, found in Methylibium petroleiphilum (strain ATCC BAA-1232 / LMG 22953 / PM1).